We begin with the raw amino-acid sequence, 356 residues long: Outer membrane protein Omp38 (356 aa).

Positions 1–19 (MKLSRIALATMLVAAPLAA) are cleaved as a signal peptide. The OmpA-like domain occupies 221–339 (ELTEDLNMEL…RVFATITGSR (119 aa)).

This sequence belongs to the outer membrane OOP (TC 1.B.6) superfamily. In terms of assembly, homotrimer.

Its subcellular location is the cell outer membrane. Porin. Induces apoptosis in human cells through caspases-dependent and AIF-dependent pathways. Purified Omp38 enters the cells and localizes to the mitochondria, which leads to a release of proapoptotic molecules such as cytochrome c and AIF (apoptosis-inducing factor). This chain is Outer membrane protein Omp38 (omp38), found in Acinetobacter baumannii (strain ATCC 17978 / DSM 105126 / CIP 53.77 / LMG 1025 / NCDC KC755 / 5377).